Here is a 187-residue protein sequence, read N- to C-terminus: Calcium and integrin-binding family member 2 (187 aa).

EF-hand domains follow at residues 66–101 (KENP…LSEM), 103–138 (PREL…LTKE), and 144–179 (EVNL…APDF). Ca(2+)-binding residues include Asp157, Asp159, Asp161, Lys163, and Asp168.

In terms of assembly, monomer. Homodimer. In terms of tissue distribution, enriched in central and striolar hair cells.

It is found in the cytoplasm. Its subcellular location is the cell projection. It localises to the stereocilium. The protein localises to the photoreceptor inner segment. The protein resides in the cilium. It is found in the photoreceptor outer segment. Its subcellular location is the cell membrane. It localises to the sarcolemma. Calcium- and integrin-binding protein. Plays a role in intracellular calcium homeostasis. Critical for proper photoreceptor cell maintenance and function. Essential for development, maintenance and function of mechanosensory hair cells. This Danio rerio (Zebrafish) protein is Calcium and integrin-binding family member 2.